We begin with the raw amino-acid sequence, 365 residues long: Chorismate synthase (365 aa).

Arginine 48 and arginine 54 together coordinate NADP(+). Residues 125 to 127, 237 to 238, glycine 277, 292 to 296, and arginine 318 each bind FMN; these read RSS, NA, and KPTSS.

Belongs to the chorismate synthase family. In terms of assembly, homotetramer. It depends on FMNH2 as a cofactor.

The catalysed reaction is 5-O-(1-carboxyvinyl)-3-phosphoshikimate = chorismate + phosphate. It participates in metabolic intermediate biosynthesis; chorismate biosynthesis; chorismate from D-erythrose 4-phosphate and phosphoenolpyruvate: step 7/7. Catalyzes the anti-1,4-elimination of the C-3 phosphate and the C-6 proR hydrogen from 5-enolpyruvylshikimate-3-phosphate (EPSP) to yield chorismate, which is the branch point compound that serves as the starting substrate for the three terminal pathways of aromatic amino acid biosynthesis. This reaction introduces a second double bond into the aromatic ring system. This is Chorismate synthase from Paracidovorax citrulli (strain AAC00-1) (Acidovorax citrulli).